A 314-amino-acid chain; its full sequence is Probable cell division protein WhiA (314 aa).

Residues 274-308 constitute a DNA-binding region (H-T-H motif); the sequence is SLKELGEMVSTGPISKSGMNHRLRKLNELADKIRN.

Belongs to the WhiA family.

Its function is as follows. Involved in cell division and chromosome segregation. This chain is Probable cell division protein WhiA, found in Staphylococcus epidermidis (strain ATCC 35984 / DSM 28319 / BCRC 17069 / CCUG 31568 / BM 3577 / RP62A).